The following is a 717-amino-acid chain: Glutamine--fructose-6-phosphate aminotransferase [isomerizing] (717 aa).

Cys-2 serves as the catalytic For GATase activity. The Glutamine amidotransferase type-2 domain occupies 2 to 318 (CGIFGYCNYL…DDDLAHIYDG (317 aa)). At Ser-253 the chain carries Phosphoserine. Thr-334 carries the post-translational modification Phosphothreonine. Ser-336 carries the phosphoserine modification. SIS domains are found at residues 390-529 (WLPV…DRVS) and 562-707 (CATE…VDFP).

It carries out the reaction D-fructose 6-phosphate + L-glutamine = D-glucosamine 6-phosphate + L-glutamate. The protein operates within nucleotide-sugar biosynthesis; UDP-N-acetyl-alpha-D-glucosamine biosynthesis; alpha-D-glucosamine 6-phosphate from D-fructose 6-phosphate: step 1/1. Its function is as follows. Involved in amino sugar synthesis (formation of chitin, supplies the amino sugars of asparagine-linked oligosaccharides of glycoproteins). In Saccharomyces cerevisiae (strain ATCC 204508 / S288c) (Baker's yeast), this protein is Glutamine--fructose-6-phosphate aminotransferase [isomerizing] (GFA1).